The primary structure comprises 470 residues: MAGEDHQWQGSILYNMLMSAKQRHAAPEAPEARLGDQCWGCSCGDEPGVGREGLLGGRNVALLYRCCFCGKDHPRQGSILYSMLTSAKQTYAAPKAPEARLGPCWGCSCGSDPGVGREGLPGGRPVALLYRCCFCGEDHPRQGSILYSLLTSAKQTHVAPAAPEARPGGAWWDRSYFAQRPGGKEGLPGRRAMALLYRCCFCGEDQPQQGSTLYSMPTSTNQTPAAPEERPGAPWWDTSCGALRPVALKNPQVVCEAASAGLLKTLRFVKYLPCFQVLPLDQQLVLVRNCWAPLLMLELAQDHLQFETVEVSEPSMLQKILTTRRRETGGTEPLPVPTLQPHLAPPAEARKVPSASQVQAIKCFLSKCWSLNISTKEYAYLKGTVLFNPDVPGLQCVKYIQGLQWGTQQILSEHIRMTHRGHHDRFIELNSALFLLRFINANVIAELFFRPIIGTVSMDDMMLEMLCTKL.

Repeat copies occupy residues 1–67, 68–133, and 134–200. Positions 1 to 253 are 4 X 67 AA tandem repeats; the sequence is MAGEDHQWQG…RPVALKNPQV (253 aa). Short sequence motifs (LXXLL motif) lie at residues 13 to 17, 80 to 84, and 146 to 150; these read LYNML, LYSML, and LYSLL. One copy of the 4; truncated repeat lies at 201-253; sequence FCGEDQPQQGSTLYSMPTSTNQTPAAPEERPGAPWWDTSCGALRPVALKNPQV. In terms of domain architecture, NR LBD spans 205 to 469; the sequence is DQPQQGSTLY…DMMLEMLCTK (265 aa). An AF-2 motif motif is present at residues 461-466; the sequence is MMLEML.

Belongs to the nuclear hormone receptor family. NR0 subfamily. In terms of assembly, homodimer. Interacts with NR5A1, NR5A2, NR0B2 and with COPS2. Interacts with ESRRB; represses ESRRB activity at the GATA6 promoter.

It localises to the nucleus. Its subcellular location is the cytoplasm. Its function is as follows. Nuclear receptor that lacks a DNA-binding domain and acts as a corepressor that inhibits the transcriptional activity of other nuclear receptors through heterodimeric interactions. Component of a cascade required for the development of the hypothalamic-pituitary-adrenal-gonadal axis. May also have a role in the development of the embryo and in the maintenance of embryonic stem cell pluripotency. The protein is Nuclear receptor subfamily 0 group B member 1 (NR0B1) of Callithrix jacchus (White-tufted-ear marmoset).